We begin with the raw amino-acid sequence, 108 residues long: Peptidyl-prolyl cis-trans isomerase FKBP1A (108 aa).

Residues 20–108 enclose the PPIase FKBP-type domain; sequence GQTCVVHYTG…VFDVELLKLE (89 aa). N6-acetyllysine; alternate is present on K53. K53 carries the post-translational modification N6-succinyllysine; alternate.

It belongs to the FKBP-type PPIase family. FKBP1 subfamily. In terms of assembly, interacts with TGFBR1; prevents TGFBR1 phosphorylation by TGFBR2 and stabilizes it in the inactive conformation. Interacts with ACVR1B and SMAD7. Identified in a complex composed of RYR1, PDE4D, PKA, FKBP1A and protein phosphatase 1 (PP1). Interacts directly with RYR2 and RYR3. Interacts directly with RYR1. Interacts with GLMN; rapamycin and FK506 abolish the interaction with GLMN in a dose dependent manner.

It is found in the cytoplasm. It localises to the cytosol. The protein resides in the sarcoplasmic reticulum membrane. It catalyses the reaction [protein]-peptidylproline (omega=180) = [protein]-peptidylproline (omega=0). Inhibited by both FK506 and rapamycin. In terms of biological role, keeps in an inactive conformation TGFBR1, the TGF-beta type I serine/threonine kinase receptor, preventing TGF-beta receptor activation in absence of ligand. Recruits SMAD7 to ACVR1B which prevents the association of SMAD2 and SMAD3 with the activin receptor complex, thereby blocking the activin signal. May modulate the RYR1 calcium channel activity. PPIases accelerate the folding of proteins. It catalyzes the cis-trans isomerization of proline imidic peptide bonds in oligopeptides. In Mus musculus (Mouse), this protein is Peptidyl-prolyl cis-trans isomerase FKBP1A (Fkbp1a).